We begin with the raw amino-acid sequence, 218 residues long: MDKSESTSAGRNRRRRPRRGSRSASSSADANFRVLSQQLSRLNKTLAAGRPTINHPTFVGSERCKPGYTFSSITLNPPKIDRGSYYGKRLLLPDSVTEFDKKLVSRIQIRVNPLPKFDSTVWVTVRKVPASSDLSVAAISAMFADGASPVLVYQYAASGVQANNKLLYDLSAMRADIGDMRKYAVLVYSKDDALETDELVLHVDVEHQRIPTSGVLPV.

Methionine 1 is subject to N-acetylmethionine; by host. The segment covering 1 to 10 (MDKSESTSAG) has biased composition (low complexity). Residues 1–29 (MDKSESTSAGRNRRRRPRRGSRSASSSAD) are disordered. Residues 11-21 (RNRRRRPRRGS) are compositionally biased toward basic residues.

The protein belongs to the cucumovirus capsid protein family.

The protein localises to the virion. Its function is as follows. Capsid protein. Probably binds RNA and plays a role in packaging. The protein is Capsid protein of Cucumis sativus (Cucumber).